The sequence spans 93 residues: MPRSLKKGPFVDGHLIKKVDVQNEAGTKNVIKTWSRRSMIVPAMLGHTIAVHNGKIHVPVFVTESMVGHKLGEFSPTRTFRGHVKDDRKSKRR.

The interval 74–93 (FSPTRTFRGHVKDDRKSKRR) is disordered. Positions 83–93 (HVKDDRKSKRR) are enriched in basic and acidic residues.

This sequence belongs to the universal ribosomal protein uS19 family.

Its function is as follows. Protein S19 forms a complex with S13 that binds strongly to the 16S ribosomal RNA. This chain is Small ribosomal subunit protein uS19, found in Streptomyces griseus subsp. griseus (strain JCM 4626 / CBS 651.72 / NBRC 13350 / KCC S-0626 / ISP 5235).